The sequence spans 188 residues: MKKIGVLAIQGAVDEHIQMIESAGALAFKVKHSSDLDGLDGLVLPGGESTTMRKIMKRYDLMEPIRAFASEGKAIFGTCAGLVLLSKEIEGGEESLGLIEATAIRNGFGRQKESFEAELNIEAFGEPAFEAIFIRAPYLIEPSNEVAVLATVENRIVAAKQANILVTAFHPELTNDNRWMNYFLEKMV.

47–49 contributes to the L-glutamine binding site; it reads GES. Cys-79 functions as the Nucleophile in the catalytic mechanism. L-glutamine contacts are provided by residues Arg-105 and 134–135; that span reads IR. Active-site charge relay system residues include His-170 and Glu-172.

Belongs to the glutaminase PdxT/SNO family. As to quaternary structure, in the presence of PdxS, forms a dodecamer of heterodimers. Only shows activity in the heterodimer.

It catalyses the reaction aldehydo-D-ribose 5-phosphate + D-glyceraldehyde 3-phosphate + L-glutamine = pyridoxal 5'-phosphate + L-glutamate + phosphate + 3 H2O + H(+). The enzyme catalyses L-glutamine + H2O = L-glutamate + NH4(+). It participates in cofactor biosynthesis; pyridoxal 5'-phosphate biosynthesis. Its function is as follows. Catalyzes the hydrolysis of glutamine to glutamate and ammonia as part of the biosynthesis of pyridoxal 5'-phosphate. The resulting ammonia molecule is channeled to the active site of PdxS. This is Pyridoxal 5'-phosphate synthase subunit PdxT from Listeria monocytogenes serotype 4b (strain CLIP80459).